The following is a 311-amino-acid chain: Olfactory receptor 5L2 (311 aa).

The Extracellular portion of the chain corresponds to 1–25 (MGKENCTTVAEFILLGLSDVPELRV). The N-linked (GlcNAc...) asparagine glycan is linked to asparagine 5. The chain crosses the membrane as a helical span at residues 26–46 (CLFLLFLLIYGVTLLANLGMT). Over 47-54 (ALIQVSSR) the chain is Cytoplasmic. Residues 55 to 75 (LHTPVYFFLSHLSFVDFCYSS) form a helical membrane-spanning segment. The Extracellular portion of the chain corresponds to 76–99 (IIVPKMLANIFNKDKAISFLGCMV). The cysteines at positions 97 and 189 are disulfide-linked. A helical transmembrane segment spans residues 100 to 120 (QFYLFCTCGVTEVFLLAVMAY). Over 121–139 (DRFVAICNPLLYMVTMSQK) the chain is Cytoplasmic. Residues 140 to 160 (LRVELTSCCYFCGTVCSLIHS) traverse the membrane as a helical segment. Over 161–196 (SLALRILFYRSNVINHFFCDLPPLLSLACSDVTVNE) the chain is Extracellular. N-linked (GlcNAc...) asparagine glycosylation is present at asparagine 195. The helical transmembrane segment at 197-217 (TLLFLVATLNESVTIMIILTS) threads the bilayer. The Cytoplasmic portion of the chain corresponds to 218–237 (YLLILTTILKIHSAESRHKA). The chain crosses the membrane as a helical span at residues 238–258 (FSTCASHLTAITVSHGTILYI). The Extracellular portion of the chain corresponds to 259–271 (YCRPSSGNSGDVD). A helical transmembrane segment spans residues 272 to 292 (KVATVFYTVVIPMLNPLIYSL). Over 293–311 (RNKDVNKALRKVMGSKIHS) the chain is Cytoplasmic.

The protein belongs to the G-protein coupled receptor 1 family.

The protein localises to the cell membrane. Odorant receptor. This chain is Olfactory receptor 5L2 (OR5L2), found in Homo sapiens (Human).